A 126-amino-acid polypeptide reads, in one-letter code: Fluoride-specific ion channel FluC (126 aa).

4 consecutive transmembrane segments (helical) span residues 4 to 24, 35 to 55, 71 to 91, and 104 to 124; these read FMLLGFIAFGGAFGACARYLI, GFPYGTLTVNIVGSLIMGVLM, IIGLGFLGALTTFSTFSMDNV, and LNILLNVTLSITACFIGFQLM. Positions 78 and 81 each coordinate Na(+).

Belongs to the fluoride channel Fluc/FEX (TC 1.A.43) family.

The protein localises to the cell inner membrane. The catalysed reaction is fluoride(in) = fluoride(out). Its activity is regulated as follows. Na(+) is not transported, but it plays an essential structural role and its presence is essential for fluoride channel function. In terms of biological role, fluoride-specific ion channel. Important for reducing fluoride concentration in the cell, thus reducing its toxicity. The chain is Fluoride-specific ion channel FluC from Aliivibrio salmonicida (strain LFI1238) (Vibrio salmonicida (strain LFI1238)).